Consider the following 421-residue polypeptide: Gamma-glutamyl phosphate reductase (421 aa).

It belongs to the gamma-glutamyl phosphate reductase family.

It localises to the cytoplasm. It catalyses the reaction L-glutamate 5-semialdehyde + phosphate + NADP(+) = L-glutamyl 5-phosphate + NADPH + H(+). It participates in amino-acid biosynthesis; L-proline biosynthesis; L-glutamate 5-semialdehyde from L-glutamate: step 2/2. Catalyzes the NADPH-dependent reduction of L-glutamate 5-phosphate into L-glutamate 5-semialdehyde and phosphate. The product spontaneously undergoes cyclization to form 1-pyrroline-5-carboxylate. The protein is Gamma-glutamyl phosphate reductase of Acinetobacter baumannii (strain ACICU).